A 361-amino-acid polypeptide reads, in one-letter code: Chorismate synthase (361 aa).

Residues Arg48 and Arg54 each contribute to the NADP(+) site. FMN is bound by residues 125–127 (RSS), 238–239 (NA), Gly278, 293–297 (KPTSS), and Arg319.

It belongs to the chorismate synthase family. In terms of assembly, homotetramer. The cofactor is FMNH2.

The catalysed reaction is 5-O-(1-carboxyvinyl)-3-phosphoshikimate = chorismate + phosphate. Its pathway is metabolic intermediate biosynthesis; chorismate biosynthesis; chorismate from D-erythrose 4-phosphate and phosphoenolpyruvate: step 7/7. In terms of biological role, catalyzes the anti-1,4-elimination of the C-3 phosphate and the C-6 proR hydrogen from 5-enolpyruvylshikimate-3-phosphate (EPSP) to yield chorismate, which is the branch point compound that serves as the starting substrate for the three terminal pathways of aromatic amino acid biosynthesis. This reaction introduces a second double bond into the aromatic ring system. The polypeptide is Chorismate synthase (Vibrio campbellii (strain ATCC BAA-1116)).